The following is a 577-amino-acid chain: Glycine--tRNA ligase (577 aa).

Positions 98 and 164 each coordinate substrate. Residues 196–198 (RNE), 206–211 (IRLREF), 328–329 (EC), and 451–454 (GIDR) contribute to the ATP site. 211 to 215 (FTQAE) contributes to the substrate binding site. 447-451 (EPSYG) provides a ligand contact to substrate.

It belongs to the class-II aminoacyl-tRNA synthetase family.

It is found in the cytoplasm. It carries out the reaction tRNA(Gly) + glycine + ATP = glycyl-tRNA(Gly) + AMP + diphosphate. Its function is as follows. Catalyzes the attachment of glycine to tRNA(Gly). The sequence is that of Glycine--tRNA ligase from Methanocaldococcus jannaschii (strain ATCC 43067 / DSM 2661 / JAL-1 / JCM 10045 / NBRC 100440) (Methanococcus jannaschii).